The primary structure comprises 95 residues: Co-chaperonin GroES (95 aa).

The protein belongs to the GroES chaperonin family. In terms of assembly, heptamer of 7 subunits arranged in a ring. Interacts with the chaperonin GroEL.

Its subcellular location is the cytoplasm. Its function is as follows. Together with the chaperonin GroEL, plays an essential role in assisting protein folding. The GroEL-GroES system forms a nano-cage that allows encapsulation of the non-native substrate proteins and provides a physical environment optimized to promote and accelerate protein folding. GroES binds to the apical surface of the GroEL ring, thereby capping the opening of the GroEL channel. This chain is Co-chaperonin GroES, found in Desulfosudis oleivorans (strain DSM 6200 / JCM 39069 / Hxd3) (Desulfococcus oleovorans).